A 160-amino-acid polypeptide reads, in one-letter code: MNEQEPAPKRGRRFKEQTPVQRALGLLVRREHSRKELNRKLLARGIEPDAAQAAVDRLTGEGWQDDARFAAAVVRNRAGSGYGPLHIRAELGTHGLDSEAISAAMATFQGDWTENARDLIHRRFGEQGPIDLPQRRKAADWLARRGFDGNSIRAATRFDP.

Belongs to the RecX family.

It is found in the cytoplasm. In terms of biological role, modulates RecA activity. In Xanthomonas oryzae pv. oryzae (strain MAFF 311018), this protein is Regulatory protein RecX.